We begin with the raw amino-acid sequence, 717 residues long: PAN2-PAN3 deadenylation complex subunit PAN3 (717 aa).

The C3H1-type zinc finger occupies 8–37; the sequence is WARDVPCRNVIIYGFCKKKTEGCPFKHDDD. The tract at residues 37 to 100 is disordered; it reads DDIATPTSTP…HTGSKSQVPK (64 aa). The segment covering 62 to 90 has biased composition (low complexity); sequence PSKISVSSLPSLNSQPSSTAPTSAPNATA. The span at 91-100 shows a compositional bias: polar residues; sequence HTGSKSQVPK. The pseudokinase domain stretch occupies residues 323–585; the sequence is QLFPSGGNLP…ATIIEKYIGL (263 aa). Residues arginine 378, 428 to 435, and 482 to 483 each bind ATP; these read DYYPNATS and DK. A coiled-coil region spans residues 586–624; it reads DVVFKVMEAQQTYSEYAENVLSRELENGRLFRLICKLNF. The interval 625–717 is knob domain; the sequence is IFGRVENRLD…VDKTFRAMTL (93 aa).

It belongs to the protein kinase superfamily. PAN3 family. In terms of assembly, homodimer. Forms a heterotrimer with a catalytic subunit PAN2 to form the poly(A)-nuclease (PAN) deadenylation complex. Interacts (via PAM-2 motif) with poly(A)-binding protein PAB1 (via PABC domain), conferring substrate specificity of the enzyme complex.

The protein resides in the cytoplasm. Regulatory subunit of the poly(A)-nuclease (PAN) deadenylation complex, one of two cytoplasmic mRNA deadenylases involved in mRNA turnover. PAN specifically shortens poly(A) tails of RNA and the activity is stimulated by poly(A)-binding protein PAB1. PAN deadenylation is followed by rapid degradation of the shortened mRNA tails by the CCR4-NOT complex. Deadenylated mRNAs are then degraded by two alternative mechanisms, namely exosome-mediated 3'-5' exonucleolytic degradation, or deadenylation-dependent mRNA decaping and subsequent 5'-3' exonucleolytic degradation by XRN1. May also be involved in post-transcriptional maturation of mRNA poly(A) tails. PAN3 acts as a positive regulator for PAN activity, recruiting the catalytic subunit PAN2 to mRNA via its interaction with RNA and with PAB1. This is PAN2-PAN3 deadenylation complex subunit PAN3 from Candida glabrata (strain ATCC 2001 / BCRC 20586 / JCM 3761 / NBRC 0622 / NRRL Y-65 / CBS 138) (Yeast).